A 304-amino-acid polypeptide reads, in one-letter code: ATP synthase gamma chain (304 aa).

Belongs to the ATPase gamma chain family. F-type ATPases have 2 components, CF(1) - the catalytic core - and CF(0) - the membrane proton channel. CF(1) has five subunits: alpha(3), beta(3), gamma(1), delta(1), epsilon(1). CF(0) has three main subunits: a, b and c.

The protein localises to the cell membrane. Functionally, produces ATP from ADP in the presence of a proton gradient across the membrane. The gamma chain is believed to be important in regulating ATPase activity and the flow of protons through the CF(0) complex. The polypeptide is ATP synthase gamma chain (Mycolicibacterium paratuberculosis (strain ATCC BAA-968 / K-10) (Mycobacterium paratuberculosis)).